Here is a 279-residue protein sequence, read N- to C-terminus: 4-diphosphocytidyl-2-C-methyl-D-erythritol kinase (279 aa).

The active site involves lysine 11. 95–105 provides a ligand contact to ATP; the sequence is PVAAGLGGGSS. Residue aspartate 137 is part of the active site.

It belongs to the GHMP kinase family. IspE subfamily.

It carries out the reaction 4-CDP-2-C-methyl-D-erythritol + ATP = 4-CDP-2-C-methyl-D-erythritol 2-phosphate + ADP + H(+). Its pathway is isoprenoid biosynthesis; isopentenyl diphosphate biosynthesis via DXP pathway; isopentenyl diphosphate from 1-deoxy-D-xylulose 5-phosphate: step 3/6. In terms of biological role, catalyzes the phosphorylation of the position 2 hydroxy group of 4-diphosphocytidyl-2C-methyl-D-erythritol. The protein is 4-diphosphocytidyl-2-C-methyl-D-erythritol kinase of Geotalea daltonii (strain DSM 22248 / JCM 15807 / FRC-32) (Geobacter daltonii).